The primary structure comprises 480 residues: NADH-quinone oxidoreductase subunit N 1 (480 aa).

A run of 14 helical transmembrane segments spans residues Leu12–Phe32, Thr38–Leu58, Phe78–Ala98, Phe106–Asn126, Leu128–Ile148, Phe163–Phe183, Leu203–Val223, Thr241–Ile261, Trp271–Ile291, Ser303–Val323, Val326–Ala346, Ala372–Phe392, Phe396–Ala416, and Leu449–Gly469.

Belongs to the complex I subunit 2 family. In terms of assembly, NDH-1 is composed of 14 different subunits. Subunits NuoA, H, J, K, L, M, N constitute the membrane sector of the complex.

It is found in the cell inner membrane. It catalyses the reaction a quinone + NADH + 5 H(+)(in) = a quinol + NAD(+) + 4 H(+)(out). In terms of biological role, NDH-1 shuttles electrons from NADH, via FMN and iron-sulfur (Fe-S) centers, to quinones in the respiratory chain. The immediate electron acceptor for the enzyme in this species is believed to be ubiquinone. Couples the redox reaction to proton translocation (for every two electrons transferred, four hydrogen ions are translocated across the cytoplasmic membrane), and thus conserves the redox energy in a proton gradient. The chain is NADH-quinone oxidoreductase subunit N 1 from Rhizobium meliloti (strain 1021) (Ensifer meliloti).